The primary structure comprises 190 residues: dCTP deaminase (190 aa).

113–118 serves as a coordination point for dCTP; that stretch reads KSTYAR. The Proton donor/acceptor role is filled by glutamate 139. 4 residues coordinate dCTP: glutamine 158, tyrosine 172, lysine 181, and glutamine 182.

The protein belongs to the dCTP deaminase family. Homotrimer.

The enzyme catalyses dCTP + H2O + H(+) = dUTP + NH4(+). It participates in pyrimidine metabolism; dUMP biosynthesis; dUMP from dCTP (dUTP route): step 1/2. In terms of biological role, catalyzes the deamination of dCTP to dUTP. This is dCTP deaminase from Chlamydia trachomatis serovar L2 (strain ATCC VR-902B / DSM 19102 / 434/Bu).